Consider the following 506-residue polypeptide: MMDFVLLEKALLGLFIATIVAITISKLRGKKLKLPPGPIPVPVFGNWLQVGDDLNQRNLVDYAKKFGDLFMLRMGQRNLVVVSSPELAKDVLHTQGVEFGSRTRNVVFDIFTGKGQDMVFTVYSEHWRKMRRIMTVPFFTNKVVQQYRFGWEDEAARVVEDVKANPEAATNGIVLRNRLQLLMYNNMYRIMFDRRFESVDDPLFLKLKALNGERSRLAQSFEYHFGDFIPILRPFLRGYLKLCQEIKDKRLKLFKDYFVDERKKLESIKSVDNNSLKCAIDHIIEAQQKGEINEDNVLYIVENINVAAIETTLWSIEWGIAELVNNPEIQKKLRHELDTVLGAGVQICEPDVQKLPYLQAVIKETLRYRMAIPLLVPHMNLHDAKLAGYDIPAESKILVNAWWLANNPAHWNKPDEFRPERFLEEESKVEANGNDFKYIPFGVGRRSCPGIILALPILGIVIGRLVQNFELLPPPGQSKIDTAEKGGQFSLQILKHSTIVCKPRSL.

The helical transmembrane segment at 3–23 (DFVLLEKALLGLFIATIVAIT) threads the bilayer. (E)-cinnamate is bound by residues 214 to 219 (RSRLAQ) and Ala-307. Position 448 (Cys-448) interacts with heme.

This sequence belongs to the cytochrome P450 family. Heme is required as a cofactor.

It localises to the membrane. The catalysed reaction is (E)-cinnamate + reduced [NADPH--hemoprotein reductase] + O2 = (E)-4-coumarate + oxidized [NADPH--hemoprotein reductase] + H2O + H(+). The protein operates within phenylpropanoid metabolism; trans-4-coumarate biosynthesis; trans-4-coumarate from trans-cinnamate: step 1/1. Catalyzes the first oxidative step of the phenylpropanoid pathway in higher plants by transforming trans-cinnamate into p-coumarate. The compounds formed by this pathway are essential components for lignification, pollination, and defense against ultraviolet light, predators and pathogens. The protein is Trans-cinnamate 4-monooxygenase (CYP73A10) of Petroselinum crispum (Parsley).